The chain runs to 442 residues: D-serine dehydratase (442 aa).

N6-(pyridoxal phosphate)lysine is present on lysine 118.

Belongs to the serine/threonine dehydratase family. DsdA subfamily. In terms of assembly, monomer. Pyridoxal 5'-phosphate serves as cofactor.

The catalysed reaction is D-serine = pyruvate + NH4(+). The chain is D-serine dehydratase from Citrobacter koseri (strain ATCC BAA-895 / CDC 4225-83 / SGSC4696).